Consider the following 292-residue polypeptide: D-tagatose-1,6-bisphosphate aldolase subunit KbaY (292 aa).

Asp82 acts as the Proton donor in catalysis. Zn(2+) contacts are provided by His83 and His180. Gly181 provides a ligand contact to dihydroxyacetone phosphate. Residue His208 participates in Zn(2+) binding. Dihydroxyacetone phosphate-binding positions include 209–211 (GAS) and 230–233 (NVAT).

It belongs to the class II fructose-bisphosphate aldolase family. TagBP aldolase KbaY subfamily. In terms of assembly, homotetramer. Forms a complex with KbaZ. It depends on Zn(2+) as a cofactor.

It carries out the reaction D-tagatofuranose 1,6-bisphosphate = D-glyceraldehyde 3-phosphate + dihydroxyacetone phosphate. Its pathway is carbohydrate metabolism; D-tagatose 6-phosphate degradation; D-glyceraldehyde 3-phosphate and glycerone phosphate from D-tagatose 6-phosphate: step 2/2. In terms of biological role, catalytic subunit of the tagatose-1,6-bisphosphate aldolase KbaYZ, which catalyzes the reversible aldol condensation of dihydroxyacetone phosphate (DHAP or glycerone-phosphate) with glyceraldehyde 3-phosphate (G3P) to produce tagatose 1,6-bisphosphate (TBP). Requires KbaZ subunit for full activity and stability. The sequence is that of D-tagatose-1,6-bisphosphate aldolase subunit KbaY from Enterobacter sp. (strain 638).